A 245-amino-acid polypeptide reads, in one-letter code: 23S rRNA (guanosine-2'-O-)-methyltransferase RlmB (245 aa).

Residues Gly-197, Ile-217, and Leu-226 each coordinate S-adenosyl-L-methionine.

This sequence belongs to the class IV-like SAM-binding methyltransferase superfamily. RNA methyltransferase TrmH family. RlmB subfamily.

It localises to the cytoplasm. It carries out the reaction guanosine(2251) in 23S rRNA + S-adenosyl-L-methionine = 2'-O-methylguanosine(2251) in 23S rRNA + S-adenosyl-L-homocysteine + H(+). Functionally, specifically methylates the ribose of guanosine 2251 in 23S rRNA. This Bordetella parapertussis (strain 12822 / ATCC BAA-587 / NCTC 13253) protein is 23S rRNA (guanosine-2'-O-)-methyltransferase RlmB.